The chain runs to 164 residues: Histone H1 (164 aa).

The segment covering 1–10 has biased composition (polar residues); it reads MAPRSSTSKS. The disordered stretch occupies residues 1–164; the sequence is MAPRSSTSKS…KKSSKPAKKN (164 aa). Residues 16-27 are compositionally biased toward basic residues; that stretch reads KDHKKAPIKKAI. Residues T47 and T54 each carry the phosphothreonine modification. Composition is skewed to basic and acidic residues over residues 49-61, 69-89, and 117-156; these read VKKDVTPVKADTK, TMKETVSDAKKTVHAAAGDKK, and TKKEVKKDNKTAKKETKKDHKPAKKEAKKETKPAKKDAKK.

Cell-growth/division-associated phosphorylation by a CDC2-like kinase.

Its subcellular location is the nucleus. The protein localises to the chromosome. Functionally, histones H1 are necessary for the condensation of nucleosome chains into higher-order structures. The polypeptide is Histone H1 (HHO) (Tetrahymena thermophila (strain SB210)).